The following is a 348-amino-acid chain: sn-glycerol-3-phosphate import ATP-binding protein UgpC (348 aa).

The 232-residue stretch at 4–235 (IQLSNIKKQY…PETTFVADFI (232 aa)) folds into the ABC transporter domain. ATP is bound at residue 37 to 44 (GPSGCGKS).

The protein belongs to the ABC transporter superfamily. sn-glycerol-3-phosphate importer (TC 3.A.1.1.3) family. The complex is composed of two ATP-binding proteins (UgpC), two transmembrane proteins (UgpA and UgpE) and a solute-binding protein (UgpB).

The protein resides in the cell inner membrane. It carries out the reaction sn-glycerol 3-phosphate(out) + ATP + H2O = sn-glycerol 3-phosphate(in) + ADP + phosphate + H(+). Part of the ABC transporter complex UgpBAEC involved in sn-glycerol-3-phosphate (G3P) import. Responsible for energy coupling to the transport system. This is sn-glycerol-3-phosphate import ATP-binding protein UgpC from Bartonella quintana (strain Toulouse) (Rochalimaea quintana).